We begin with the raw amino-acid sequence, 732 residues long: DNA-directed RNA polymerase subunit beta' (732 aa).

C70, C72, C85, and C88 together coordinate Zn(2+). Mg(2+) is bound by residues D575, D577, and D579.

Belongs to the RNA polymerase beta' chain family. RpoC1 subfamily. In terms of assembly, in plastids the minimal PEP RNA polymerase catalytic core is composed of four subunits: alpha, beta, beta', and beta''. When a (nuclear-encoded) sigma factor is associated with the core the holoenzyme is formed, which can initiate transcription. Requires Mg(2+) as cofactor. Zn(2+) serves as cofactor.

Its subcellular location is the plastid. The protein localises to the chloroplast. The catalysed reaction is RNA(n) + a ribonucleoside 5'-triphosphate = RNA(n+1) + diphosphate. Its function is as follows. DNA-dependent RNA polymerase catalyzes the transcription of DNA into RNA using the four ribonucleoside triphosphates as substrates. The sequence is that of DNA-directed RNA polymerase subunit beta' from Thalassiosira pseudonana (Marine diatom).